Here is a 237-residue protein sequence, read N- to C-terminus: Putative ATP-binding protein BMEII0108 (237 aa).

One can recognise an ABC transporter domain in the interval 5-205 (ISFNNVVMRY…DLPYPRTEAI (201 aa)). Residue 37–44 (GPSGCGKS) coordinates ATP.

Belongs to the ABC transporter superfamily. In terms of assembly, the complex is composed of two ATP-binding proteins (BMEII0108), two transmembrane proteins (BMEII0107) and a solute-binding protein (BMEII0109).

The protein resides in the cell inner membrane. Probably part of an ABC transporter complex. Probably Responsible for energy coupling to the transport system. The polypeptide is Putative ATP-binding protein BMEII0108 (Brucella melitensis biotype 1 (strain ATCC 23456 / CCUG 17765 / NCTC 10094 / 16M)).